Consider the following 137-residue polypeptide: Large ribosomal subunit protein uL16 (137 aa).

Belongs to the universal ribosomal protein uL16 family. Part of the 50S ribosomal subunit.

Functionally, binds 23S rRNA and is also seen to make contacts with the A and possibly P site tRNAs. This Rhizobium etli (strain CIAT 652) protein is Large ribosomal subunit protein uL16.